Here is a 1091-residue protein sequence, read N- to C-terminus: Voltage-dependent calcium channel subunit alpha-2/delta-3 (1091 aa).

The N-terminal stretch at 1–33 is a signal peptide; the sequence is MAGPGSLCCASRGASALLATALLYAALGDVVRS. Over 34–1068 the chain is Extracellular; it reads EQQIPLSVVK…HPEENARECG (1035 aa). An N-linked (GlcNAc...) asparagine glycan is attached at asparagine 166. The VWFA domain occupies 256 to 438; the sequence is DVVILVDVSG…ENVMEYLHVL (183 aa). A divalent metal cation-binding residues include aspartate 262, serine 264, and serine 266. The MIDAS-like motif motif lies at 262-266; sequence DVSGS. N-linked (GlcNAc...) asparagine glycosylation is present at asparagine 309. Cysteine 412 and cysteine 1055 are joined by a disulfide. The Cache domain occupies 452-549; it reads WTEAYIDSTL…RPLYEEGKKR (98 aa). 2 N-linked (GlcNAc...) asparagine glycosylation sites follow: asparagine 553 and asparagine 632. Tyrosine 924 carries the post-translational modification Phosphotyrosine. Residues 1069–1089 form a helical membrane-spanning segment; the sequence is GASSLQAQAALLLLPLVSSLF. At 1090-1091 the chain is on the cytoplasmic side; that stretch reads SR.

The protein belongs to the calcium channel subunit alpha-2/delta family. As to quaternary structure, dimer formed of alpha-2-2 and delta-2 chains; disulfide-linked. Voltage-dependent calcium channels are multisubunit complexes, consisting of alpha-1 (CACNA1), alpha-2 (CACNA2D), beta (CACNB) and delta (CACNA2D) subunits in a 1:1:1:1 ratio. N-glycosylated. In terms of processing, may be proteolytically processed into subunits alpha-2-3 and delta-3 that are disulfide-linked. It is however unclear whether such cleavage really takes place in vivo and has a functional role. Brain-specific. Predominantly expressed in the caudate putamen, entorhinal complex, hippocampus and cortex.

The protein resides in the membrane. Its function is as follows. The alpha-2/delta subunit of voltage-dependent calcium channels regulates calcium current density and activation/inactivation kinetics of the calcium channel. Acts as a regulatory subunit for P/Q-type calcium channel (CACNA1A), N-type (CACNA1B), L-type (CACNA1C OR CACNA1D) but not T-type (CACNA1G). The polypeptide is Voltage-dependent calcium channel subunit alpha-2/delta-3 (Cacna2d3) (Mus musculus (Mouse)).